We begin with the raw amino-acid sequence, 223 residues long: Ribonuclease T (223 aa).

The 175-residue stretch at 20–194 (VVIDVETAGF…YDTERTAELF (175 aa)) folds into the Exonuclease domain. Residues Asp23, Glu25, His181, and Asp186 each coordinate Mg(2+). The active-site Proton donor/acceptor is the His181.

The protein belongs to the RNase T family. In terms of assembly, homodimer. The cofactor is Mg(2+).

Functionally, trims short 3' overhangs of a variety of RNA species, leaving a one or two nucleotide 3' overhang. Responsible for the end-turnover of tRNA: specifically removes the terminal AMP residue from uncharged tRNA (tRNA-C-C-A). Also appears to be involved in tRNA biosynthesis. This chain is Ribonuclease T, found in Shewanella baltica (strain OS185).